The chain runs to 212 residues: MEEDFFKLILITDRQNIPMEEYLDFVSACVQSGVTAVQLREKGLSHRELLSFGGALKSILDPLDIPLIVSDSVSVCLDLDASGVHLGQTDGDVIEARELLGPDKIIGWNVHTLDQLLNANTLPIDYLGLSALFATENKPEATDLWGFSGLEQAVSLCEHPIVAVGGIDESNAGNVVEAGAAGIAAIGAFHSAHNPGLATKALREIVDRGLRC.

38–42 provides a ligand contact to 4-amino-2-methyl-5-(diphosphooxymethyl)pyrimidine; that stretch reads QLREK. Mg(2+)-binding residues include Asp-71 and Asp-90. Lys-138 serves as a coordination point for 4-amino-2-methyl-5-(diphosphooxymethyl)pyrimidine. Gly-166 contributes to the 2-[(2R,5Z)-2-carboxy-4-methylthiazol-5(2H)-ylidene]ethyl phosphate binding site.

It belongs to the thiamine-phosphate synthase family. Mg(2+) is required as a cofactor.

It catalyses the reaction 2-[(2R,5Z)-2-carboxy-4-methylthiazol-5(2H)-ylidene]ethyl phosphate + 4-amino-2-methyl-5-(diphosphooxymethyl)pyrimidine + 2 H(+) = thiamine phosphate + CO2 + diphosphate. The enzyme catalyses 2-(2-carboxy-4-methylthiazol-5-yl)ethyl phosphate + 4-amino-2-methyl-5-(diphosphooxymethyl)pyrimidine + 2 H(+) = thiamine phosphate + CO2 + diphosphate. The catalysed reaction is 4-methyl-5-(2-phosphooxyethyl)-thiazole + 4-amino-2-methyl-5-(diphosphooxymethyl)pyrimidine + H(+) = thiamine phosphate + diphosphate. It functions in the pathway cofactor biosynthesis; thiamine diphosphate biosynthesis; thiamine phosphate from 4-amino-2-methyl-5-diphosphomethylpyrimidine and 4-methyl-5-(2-phosphoethyl)-thiazole: step 1/1. Its function is as follows. Condenses 4-methyl-5-(beta-hydroxyethyl)thiazole monophosphate (THZ-P) and 2-methyl-4-amino-5-hydroxymethyl pyrimidine pyrophosphate (HMP-PP) to form thiamine monophosphate (TMP). In Chlamydia caviae (strain ATCC VR-813 / DSM 19441 / 03DC25 / GPIC) (Chlamydophila caviae), this protein is Thiamine-phosphate synthase.